Here is a 173-residue protein sequence, read N- to C-terminus: NADH-ubiquinone oxidoreductase chain 6 (173 aa).

Helical transmembrane passes span 1-21 (MTYF…AVAS), 27-47 (YGVV…LSLG), 48-68 (VSFV…VVFV), 91-111 (GVSF…IGCL), and 139-159 (CGVG…FVVL).

Belongs to the complex I subunit 6 family.

Its subcellular location is the mitochondrion membrane. It catalyses the reaction a ubiquinone + NADH + 5 H(+)(in) = a ubiquinol + NAD(+) + 4 H(+)(out). Core subunit of the mitochondrial membrane respiratory chain NADH dehydrogenase (Complex I) that is believed to belong to the minimal assembly required for catalysis. Complex I functions in the transfer of electrons from NADH to the respiratory chain. The immediate electron acceptor for the enzyme is believed to be ubiquinone. This is NADH-ubiquinone oxidoreductase chain 6 (MT-ND6) from Fratercula cirrhata (Tufted puffin).